We begin with the raw amino-acid sequence, 81 residues long: ATP synthase subunit c, chloroplastic (81 aa).

The next 2 helical transmembrane spans lie at 7–27 (AASV…PGIG) and 57–77 (LAFM…LLFA).

The protein belongs to the ATPase C chain family. In terms of assembly, F-type ATPases have 2 components, F(1) - the catalytic core - and F(0) - the membrane proton channel. F(1) has five subunits: alpha(3), beta(3), gamma(1), delta(1), epsilon(1). F(0) has four main subunits: a(1), b(1), b'(1) and c(10-14). The alpha and beta chains form an alternating ring which encloses part of the gamma chain. F(1) is attached to F(0) by a central stalk formed by the gamma and epsilon chains, while a peripheral stalk is formed by the delta, b and b' chains.

Its subcellular location is the plastid. The protein resides in the chloroplast thylakoid membrane. F(1)F(0) ATP synthase produces ATP from ADP in the presence of a proton or sodium gradient. F-type ATPases consist of two structural domains, F(1) containing the extramembraneous catalytic core and F(0) containing the membrane proton channel, linked together by a central stalk and a peripheral stalk. During catalysis, ATP synthesis in the catalytic domain of F(1) is coupled via a rotary mechanism of the central stalk subunits to proton translocation. Functionally, key component of the F(0) channel; it plays a direct role in translocation across the membrane. A homomeric c-ring of between 10-14 subunits forms the central stalk rotor element with the F(1) delta and epsilon subunits. This chain is ATP synthase subunit c, chloroplastic, found in Cryptomeria japonica (Japanese cedar).